The primary structure comprises 96 residues: Aspartyl/glutamyl-tRNA(Asn/Gln) amidotransferase subunit C (96 aa).

It belongs to the GatC family. Heterotrimer of A, B and C subunits.

The catalysed reaction is L-glutamyl-tRNA(Gln) + L-glutamine + ATP + H2O = L-glutaminyl-tRNA(Gln) + L-glutamate + ADP + phosphate + H(+). It catalyses the reaction L-aspartyl-tRNA(Asn) + L-glutamine + ATP + H2O = L-asparaginyl-tRNA(Asn) + L-glutamate + ADP + phosphate + 2 H(+). Allows the formation of correctly charged Asn-tRNA(Asn) or Gln-tRNA(Gln) through the transamidation of misacylated Asp-tRNA(Asn) or Glu-tRNA(Gln) in organisms which lack either or both of asparaginyl-tRNA or glutaminyl-tRNA synthetases. The reaction takes place in the presence of glutamine and ATP through an activated phospho-Asp-tRNA(Asn) or phospho-Glu-tRNA(Gln). The chain is Aspartyl/glutamyl-tRNA(Asn/Gln) amidotransferase subunit C from Fusobacterium nucleatum subsp. nucleatum (strain ATCC 25586 / DSM 15643 / BCRC 10681 / CIP 101130 / JCM 8532 / KCTC 2640 / LMG 13131 / VPI 4355).